Consider the following 241-residue polypeptide: Uridylate kinase (241 aa).

14-17 serves as a coordination point for ATP; that stretch reads KLSG. G56 lines the UMP pocket. ATP-binding residues include G57 and R61. UMP-binding positions include D77 and 138 to 145; that span reads TGNPFFTT. Positions 165, 171, and 174 each coordinate ATP.

The protein belongs to the UMP kinase family. In terms of assembly, homohexamer.

The protein resides in the cytoplasm. It carries out the reaction UMP + ATP = UDP + ADP. Its pathway is pyrimidine metabolism; CTP biosynthesis via de novo pathway; UDP from UMP (UMPK route): step 1/1. With respect to regulation, inhibited by UTP. Functionally, catalyzes the reversible phosphorylation of UMP to UDP. In Psychrobacter arcticus (strain DSM 17307 / VKM B-2377 / 273-4), this protein is Uridylate kinase.